A 916-amino-acid chain; its full sequence is Translation initiation factor IF-2 (916 aa).

A disordered region spans residues methionine 1–glutamine 325. Positions isoleucine 60 to arginine 91 are enriched in low complexity. A compositionally biased stretch (polar residues) spans glycine 97 to glutamine 108. Residues serine 125–arginine 182 are compositionally biased toward basic and acidic residues. 2 stretches are compositionally biased toward low complexity: residues glutamine 183–arginine 209 and aspartate 229–valine 243. Positions serine 414–aspartate 581 constitute a tr-type G domain. Residues glycine 423 to threonine 430 are G1. GTP is bound at residue glycine 423–threonine 430. Residues glycine 448–histidine 452 form a G2 region. The G3 stretch occupies residues aspartate 469–glycine 472. GTP is bound by residues aspartate 469 to histidine 473 and asparagine 523 to aspartate 526. The tract at residues asparagine 523–aspartate 526 is G4. Residues serine 559–lysine 561 form a G5 region.

The protein belongs to the TRAFAC class translation factor GTPase superfamily. Classic translation factor GTPase family. IF-2 subfamily.

The protein resides in the cytoplasm. In terms of biological role, one of the essential components for the initiation of protein synthesis. Protects formylmethionyl-tRNA from spontaneous hydrolysis and promotes its binding to the 30S ribosomal subunits. Also involved in the hydrolysis of GTP during the formation of the 70S ribosomal complex. The polypeptide is Translation initiation factor IF-2 (Rhizobium etli (strain ATCC 51251 / DSM 11541 / JCM 21823 / NBRC 15573 / CFN 42)).